Here is a 224-residue protein sequence, read N- to C-terminus: Putative N-acetylmannosamine-6-phosphate 2-epimerase (224 aa).

The protein belongs to the NanE family.

It catalyses the reaction an N-acyl-D-glucosamine 6-phosphate = an N-acyl-D-mannosamine 6-phosphate. Its pathway is amino-sugar metabolism; N-acetylneuraminate degradation; D-fructose 6-phosphate from N-acetylneuraminate: step 3/5. Functionally, converts N-acetylmannosamine-6-phosphate (ManNAc-6-P) to N-acetylglucosamine-6-phosphate (GlcNAc-6-P). This Staphylococcus carnosus (strain TM300) protein is Putative N-acetylmannosamine-6-phosphate 2-epimerase.